The sequence spans 469 residues: GTPase Der (469 aa).

EngA-type G domains follow at residues 3–166 (PVIA…PEDE) and 177–350 (LRLA…ESAN). Residues 9–16 (GRPNVGKS), 56–60 (DTGGI), 118–121 (NKVD), 183–190 (GRPNVGKS), 230–234 (DTAGV), and 295–298 (NKWD) each bind GTP. The region spanning 351-435 (LKVSPAKLTQ…PVKIEFKTSE (85 aa)) is the KH-like domain.

Belongs to the TRAFAC class TrmE-Era-EngA-EngB-Septin-like GTPase superfamily. EngA (Der) GTPase family. Associates with the 50S ribosomal subunit.

Its function is as follows. GTPase that plays an essential role in the late steps of ribosome biogenesis. The chain is GTPase Der from Acinetobacter baumannii (strain ACICU).